The primary structure comprises 842 residues: Molybdenum cofactor sulfurase (842 aa).

An N6-(pyridoxal phosphate)lysine modification is found at Lys-236. Cys-402 is an active-site residue. Positions 637 to 680 (PGSQHGDAQRSSKARLQKHQITTDQESDVQEVHPGSGTTTDSTW) are disordered. Residues 663-831 (SDVQEVHPGS…AARGDVAYPT (169 aa)) form the MOSC domain.

It belongs to the class-V pyridoxal-phosphate-dependent aminotransferase family. MOCOS subfamily. Pyridoxal 5'-phosphate serves as cofactor.

The catalysed reaction is Mo-molybdopterin + L-cysteine + AH2 = thio-Mo-molybdopterin + L-alanine + A + H2O. Its pathway is cofactor biosynthesis; molybdopterin biosynthesis. Functionally, sulfurates the molybdenum cofactor. Sulfation of molybdenum is essential for xanthine dehydrogenase (XDH) and aldehyde oxidase (ADO) enzymes in which molybdenum cofactor is liganded by 1 oxygen and 1 sulfur atom in active form. This Pyricularia oryzae (strain 70-15 / ATCC MYA-4617 / FGSC 8958) (Rice blast fungus) protein is Molybdenum cofactor sulfurase.